Here is a 239-residue protein sequence, read N- to C-terminus: MNKNIIIKSIAALTILTSITGVGTTMVEGIQQTAKAENTVKQITNTNVAPYSGVTWMGAGTGFVVGNHTIITNKHVTYHMKVGDEIKAHPNGFYNNGGGLYKVTKIVDYPGKEDIAVVQVEEKSTQPKGRKFKDFTSKFNIASEAKENEPISVIGYPNPNGNKLQMYESTGKVLSVNGNIVSSDAIIQPGSSGSPILNSKHEAIGVIYAGNKPSGESTRGFAVYFSPEIKKFIADNLDK.

Residues 1 to 36 (MNKNIIIKSIAALTILTSITGVGTTMVEGIQQTAKA) form the signal peptide. Residues histidine 75, aspartate 114, and serine 192 each act as charge relay system in the active site.

The protein belongs to the peptidase S1B family.

It is found in the secreted. The sequence is that of Serine protease SplF (splF) from Staphylococcus aureus (strain NCTC 8325 / PS 47).